The following is a 502-amino-acid chain: MEKFQGYLEFDGARQQSFLYPLFFREYIYVLSYDHGLNRLNRNRSIFLENADYDKKYSSLIVKRLILRMYEQNRLIIPTKDLNTNLGHTNLFYYQMISVLFAVIVEIPFSLRLGSSFEGKNLKKSYNLQSIHSIFPFLEDKFSHFNYVLDVLIPYPIHLEILVQTLRYRVKDASSLHFFRFCLYEYCNWKNFDSKKKSILNPRFFLFLYNSHVCEYESIFFFLRKQSSHLRSTSYEVFFERILFYGKIQHFLKVFVNNFPAILGLLKDPFLHYVRYHGKYILATKDTPLMMNKWKYYFVNLWQCYFSVWFQSQKININQLSKDNFEFLGYFSSLRLNSLVVRSQMLENSFLIDNVRRKLDSNIQISSIIGSLAKDKFCNVLGHPISKATWMDSSDSDILNRFVRICRNISHYYSGSAKKKNLYRIKYILRLCCVKTLARKHKSTVRAFLKRLGSGLLEEFLTGEDQVLSLIFPRSDYASKRLYRVRVWYLDILYLNDLVNHE.

This sequence belongs to the intron maturase 2 family. MatK subfamily.

Its subcellular location is the plastid. It localises to the chloroplast. In terms of biological role, usually encoded in the trnK tRNA gene intron. Probably assists in splicing its own and other chloroplast group II introns. Binds its homologous trnK precursor transcript. The chain is Maturase K from Sinapis alba (White mustard).